The chain runs to 126 residues: uncharacterized protein (126 aa).

Residues 1-28 are Cytoplasmic-facing; the sequence is MAGEAVSEHTPDSQEVTVTSVVCCLDSV. A helical membrane pass occupies residues 29-49; it reads VEIGHHVVYSVVTPLIVAVLI. Topologically, residues 50–75 are extracellular; that stretch reads DTMAGEAVLEHTSDSQEEIVTTVVCS. A helical membrane pass occupies residues 76 to 96; the sequence is VVPLVCFVVSVVCFVISVVEI. Position 97 (Gly-97) is a topological domain, cytoplasmic. A helical transmembrane segment spans residues 98–118; it reads HHVVYSVVAPLTVTVAVETIA. At 119 to 126 the chain is on the extracellular side; that stretch reads EEMDSVHT.

The protein localises to the membrane. This is an uncharacterized protein from Saccharomyces cerevisiae (strain ATCC 204508 / S288c) (Baker's yeast).